Consider the following 697-residue polypeptide: Elongation factor G (697 aa).

The tr-type G domain maps to 8 to 283; it reads EHIRNIGICA…AVVDFLPSPT (276 aa). Residues 17-24, 81-85, and 135-138 contribute to the GTP site; these read AHIDAGKT, DTPGH, and NKMD.

The protein belongs to the TRAFAC class translation factor GTPase superfamily. Classic translation factor GTPase family. EF-G/EF-2 subfamily.

It is found in the cytoplasm. Its function is as follows. Catalyzes the GTP-dependent ribosomal translocation step during translation elongation. During this step, the ribosome changes from the pre-translocational (PRE) to the post-translocational (POST) state as the newly formed A-site-bound peptidyl-tRNA and P-site-bound deacylated tRNA move to the P and E sites, respectively. Catalyzes the coordinated movement of the two tRNA molecules, the mRNA and conformational changes in the ribosome. This chain is Elongation factor G, found in Rickettsia massiliae (strain Mtu5).